Here is a 215-residue protein sequence, read N- to C-terminus: ER lumen protein-retaining receptor B (215 aa).

A run of 6 helical transmembrane segments spans residues Leu6–Ile26, Phe55–Tyr77, Trp98–Leu118, Val120–Leu140, Leu149–Ile169, and Phe178–Phe198.

Belongs to the ERD2 family.

The protein localises to the golgi apparatus membrane. Its subcellular location is the endoplasmic reticulum membrane. In terms of biological role, determines the specificity of the luminal endoplasmic reticulum protein retention system. Required for the retro-transport of calreticulin-3 (CRT3) from the Golgi to the ER. Specifically required for elongation factor Tu receptor (EFR) function in response to the pathogen-associated molecular pattern (PAMP) elf18. The protein is ER lumen protein-retaining receptor B (ERD2B) of Arabidopsis thaliana (Mouse-ear cress).